The sequence spans 194 residues: Large ribosomal subunit protein eL15 (194 aa).

A disordered region spans residues 164–194; the sequence is SAGKKGRGLRNKGKGAEKIRPSIRANEGKGK. Positions 167–176 are enriched in basic residues; sequence KKGRGLRNKG. A compositionally biased stretch (basic and acidic residues) spans 177 to 194; sequence KGAEKIRPSIRANEGKGK.

This sequence belongs to the eukaryotic ribosomal protein eL15 family.

The protein is Large ribosomal subunit protein eL15 (rpl15e) of Pyrococcus abyssi (strain GE5 / Orsay).